The sequence spans 195 residues: Cell division protein SepF (195 aa).

The disordered stretch occupies residues 32–54 (RYSKTNSSETLAPEEEEPIRNRR).

It belongs to the SepF family. As to quaternary structure, homodimer. Interacts with FtsZ.

Its subcellular location is the cytoplasm. Cell division protein that is part of the divisome complex and is recruited early to the Z-ring. Probably stimulates Z-ring formation, perhaps through the cross-linking of FtsZ protofilaments. Its function overlaps with FtsA. This chain is Cell division protein SepF, found in Gloeothece citriformis (strain PCC 7424) (Cyanothece sp. (strain PCC 7424)).